The sequence spans 1050 residues: Collagen alpha-2(I) chain (1050 aa).

The disordered stretch occupies residues 1–1050 (SGGFDFSFLP…FGYEGDFYRA (1050 aa)). 4-hydroxyproline is present on residues Pro-10 and Pro-13. Residues 20 to 32 (RYYGVGLGPGPMG) show a composition bias toward gly residues. Composition is skewed to low complexity over residues 33-46 (LMGPRGPPGASGAP) and 56-77 (EPGEPGQTGPAGARGPPGAPGK). 4-hydroxyproline occurs at positions 40 and 46. Over residues 78 to 92 (AGEDGHPGKPGRPGE) the composition is skewed to basic and acidic residues. Lys-114 is subject to 5-hydroxylysine; alternate. Lys-114 carries an O-linked (Gal...) hydroxylysine; alternate glycan. Composition is skewed to low complexity over residues 161-190 (VGAPGPAGARGSDGSVGPVGPAGPIGSAGP), 236-257 (PGANGLTGAKGAAGLPGVAGAP), 298-311 (EPGSAGPQGPPGSS), 320-338 (NGESGSTGPTGPPGLRGNP), and 355-371 (PAGARGASGPAGVRGPS). Residues Pro-377 and Pro-380 each carry the 4-hydroxyproline modification. Composition is skewed to low complexity over residues 406–425 (LPGIDGRPGPIGPAGARGEA) and 452–467 (AGNRGAPGPDGNNGAQ). The span at 474–483 (GVQGGKGEQG) shows a compositional bias: gly residues. Composition is skewed to low complexity over residues 530–547 (PGESGAVGPSGAIGSRGP), 598–642 (VGTT…PRGS), and 649–669 (VGPAGPNGFAGPAGAAGQPGA). Positions 670 to 679 (KGERGTKGPK) are enriched in basic and acidic residues. Positions 687–697 (PTGPVGSAGPA) are enriched in low complexity. Positions 707 to 716 (GSRGDGGPPG) are enriched in gly residues. A compositionally biased stretch (low complexity) spans 718-727 (TGFPGAAGRT). The segment covering 764–773 (GETGAGGPPG) has biased composition (gly residues). Composition is skewed to low complexity over residues 781 to 808 (SGEPGTAGPPGTAGPQGLLGAPGILGLP), 816 to 841 (LPGVAGAVGEPGPLGIAGPPGARGPS), 881 to 903 (YAGNAGPVGAAGAPGPHGTVGPA), and 911 to 926 (EPGPVGSVGPVGALGP). Residues 936–947 (RGDKGEPGDKGP) are compositionally biased toward basic and acidic residues. The segment covering 1020 to 1032 (SGPPGPPGPPGPP) has biased composition (pro residues).

The protein belongs to the fibrillar collagen family. In terms of assembly, trimers of one alpha 2(I) and two alpha 1(I) chains. Interacts (via C-terminus) with TMEM131 (via PapD-L domain); the interaction is direct and is involved in assembly and TRAPPIII ER-to-Golgi transport complex-dependent secretion of collagen. In terms of processing, prolines at the third position of the tripeptide repeating unit (G-X-Y) are hydroxylated in some or all of the chains. Expressed in bones.

The protein resides in the secreted. It localises to the extracellular space. The protein localises to the extracellular matrix. Its function is as follows. Type I collagen is a member of group I collagen (fibrillar forming collagen). In Megatherium americanum (Giant ground sloth), this protein is Collagen alpha-2(I) chain.